Consider the following 542-residue polypeptide: uncharacterized protein (542 aa).

Residues 256 to 275 (KKSTTTSSPPITTTHLSKPE) form a disordered region. Positions 258 to 269 (STTTSSPPITTT) are enriched in low complexity.

This is an uncharacterized protein from Caenorhabditis elegans.